A 31-amino-acid polypeptide reads, in one-letter code: Cyclotide mra3 (31 aa).

3 disulfide bridges follow: C5–C21, C9–C23, and C14–C28.

In terms of processing, this is a cyclic peptide. Post-translationally, contains 3 disulfide bonds.

Its function is as follows. Probably participates in a plant defense mechanism. The chain is Cyclotide mra3 from Melicytus ramiflorus (Whitey wood).